The following is a 600-amino-acid chain: Aspartate--tRNA(Asp/Asn) ligase (600 aa).

Position 181 (Glu-181) interacts with L-aspartate. Positions 205 to 208 (QQYK) are aspartate. Arg-227 lines the L-aspartate pocket. Residues 227 to 229 (RDE) and Gln-236 each bind ATP. An L-aspartate-binding site is contributed by His-455. Glu-490 is a binding site for ATP. Residue Arg-497 participates in L-aspartate binding. 542 to 545 (GLDR) provides a ligand contact to ATP.

Belongs to the class-II aminoacyl-tRNA synthetase family. Type 1 subfamily. Homodimer.

Its subcellular location is the cytoplasm. The catalysed reaction is tRNA(Asx) + L-aspartate + ATP = L-aspartyl-tRNA(Asx) + AMP + diphosphate. Aspartyl-tRNA synthetase with relaxed tRNA specificity since it is able to aspartylate not only its cognate tRNA(Asp) but also tRNA(Asn). Reaction proceeds in two steps: L-aspartate is first activated by ATP to form Asp-AMP and then transferred to the acceptor end of tRNA(Asp/Asn). This is Aspartate--tRNA(Asp/Asn) ligase from Methylacidiphilum infernorum (isolate V4) (Methylokorus infernorum (strain V4)).